The following is a 266-amino-acid chain: Apolipoprotein A-I (266 aa).

Positions 1–18 are cleaved as a signal peptide; sequence MKAVVLTLAVLFLTGSQA. Repeat copies occupy residues 67–88 and 89–110. The tract at residues 67-266 is 10 X approximate tandem repeats; it reads LKLLDNWDSL…DEATKKLNSQ (200 aa). A Methionine sulfoxide modification is found at Met-109. A 3; half-length repeat occupies 111–121; sequence KDLEEVKKKVQ. 5 consecutive repeat copies span residues 122–143, 144–165, 166–187, 188–209, and 210–231. Residues 232–242 form a 9; half-length repeat; sequence PALEDLRQGLL. Repeat 10 spans residues 243–266; that stretch reads PVLENFRVSLLAAVDEATKKLNSQ.

It belongs to the apolipoprotein A1/A4/E family. Homodimer. Interacts with APOA1BP and CLU. Component of a sperm activating protein complex (SPAP), consisting of APOA1, an immunoglobulin heavy chain, an immunoglobulin light chain and albumin. Interacts with NDRG1. Interacts with SCGB3A2. Interacts with NAXE and YJEFN3. Post-translationally, glycosylated. In terms of processing, palmitoylated. Phosphorylation sites are present in the extracellular medium.

Its subcellular location is the secreted. In terms of biological role, participates in the reverse transport of cholesterol from tissues to the liver for excretion by promoting cholesterol efflux from tissues and by acting as a cofactor for the lecithin cholesterol acyltransferase (LCAT). As part of the SPAP complex, activates spermatozoa motility. The sequence is that of Apolipoprotein A-I (APOA1) from Leptonychotes weddellii (Weddell seal).